The following is a 364-amino-acid chain: Homeobox protein Nkx-6.1 (364 aa).

The tract at residues 35 to 134 is disordered; the sequence is LYPATYPPLP…SSSSSASATS (100 aa). Composition is skewed to low complexity over residues 48–92 and 109–134; these read PSSS…LSAA and ASGAALPSASPSGSSSSSSSSASATS. The interval 101 to 268 is repressor domain; it reads LSRPSMPVAS…KYLAGPERAR (168 aa). Position 189 is an asymmetric dimethylarginine (Arg-189). A DNA-binding region (homeobox) is located at residues 236 to 295; sequence RKHTRPTFSGQQIFALEKTFEQTKYLAGPERARLAYSLGMTESQVKVWFQNRRTKWRKKH. Residues 294–364 form a disordered region; the sequence is KHAAEMATAK…LHASEAEGSS (71 aa). Residues 304-317 show a composition bias toward basic and acidic residues; the sequence is KKQDSETERLKGTS. The tract at residues 306–364 is involved in DNA-binding; sequence QDSETERLKGTSENEEEDDDYNKPLDPNSDDEKITQLLKKHKSSSGGLLLHASEAEGSS.

As to expression, pancreatic beta cells.

The protein localises to the nucleus. In terms of biological role, together with NKX2-2 and IRX3 acts to restrict the generation of motor neurons to the appropriate region of the neural tube. Belongs to the class II proteins of neuronal progenitor factors, which are induced by SHH signals. Transcription factor which binds to specific A/T-rich DNA sequences in the promoter regions of a number of genes. Involved in transcriptional regulation in islet beta cells. Binds to the insulin promoter and is involved in regulation of the insulin gene. This Mesocricetus auratus (Golden hamster) protein is Homeobox protein Nkx-6.1 (NKX6-1).